The primary structure comprises 293 residues: Indole-3-glycerol phosphate synthase (293 aa).

It belongs to the TrpC family.

It carries out the reaction 1-(2-carboxyphenylamino)-1-deoxy-D-ribulose 5-phosphate + H(+) = (1S,2R)-1-C-(indol-3-yl)glycerol 3-phosphate + CO2 + H2O. It functions in the pathway amino-acid biosynthesis; L-tryptophan biosynthesis; L-tryptophan from chorismate: step 4/5. The sequence is that of Indole-3-glycerol phosphate synthase from Rippkaea orientalis (strain PCC 8801 / RF-1) (Cyanothece sp. (strain PCC 8801)).